The primary structure comprises 577 residues: Arginine--tRNA ligase (577 aa).

A 'HIGH' region motif is present at residues 122 to 132 (PNVAKEMHVGH).

It belongs to the class-I aminoacyl-tRNA synthetase family. Monomer.

It localises to the cytoplasm. The enzyme catalyses tRNA(Arg) + L-arginine + ATP = L-arginyl-tRNA(Arg) + AMP + diphosphate. In Salmonella paratyphi A (strain ATCC 9150 / SARB42), this protein is Arginine--tRNA ligase.